Consider the following 81-residue polypeptide: Putative membrane protein insertion efficiency factor (81 aa).

Positions 59–81 (PWNPGGYDPVPPIKTSRSSSMAE) are disordered.

The protein belongs to the UPF0161 family.

The protein localises to the cell inner membrane. Could be involved in insertion of integral membrane proteins into the membrane. The polypeptide is Putative membrane protein insertion efficiency factor (Azotobacter vinelandii (strain DJ / ATCC BAA-1303)).